The primary structure comprises 136 residues: Ubiquinol-cytochrome c reductase complex assembly factor 2 (136 aa).

A mitochondrion-targeting transit peptide spans 1 to 13 (MAALRYRRFLKLC).

As to quaternary structure, interacts with UQCC1. Forms a complex, named COMB/coordinator of mitochondrial CYTB biogenesis, composed of UQCC1, UQCC2, UQCC4, UQCC5 and UQCC6; stabilizes nascent cytochrome b/MT-CYB and promotes its membrane insertion. Forms a complex, named COMA, composed of UQCC1, UQCC2 and UQCC4; activates MT-CYB translation. Forms a complex, named COMC, composed of UQCC1, UQCC2; UQCC3 and UQCC4; mediates MT-CYB hemylation and association with the first nuclear-encoded CIII subunit UQCRQ. In terms of tissue distribution, widely expressed with highest levels in brain, liver, kidney, heart, skeletal muscle, thymus, testis and pancreas (at protein level).

It is found in the mitochondrion matrix. The protein localises to the mitochondrion nucleoid. It localises to the mitochondrion. The protein resides in the mitochondrion intermembrane space. Its subcellular location is the mitochondrion inner membrane. In terms of biological role, required for the assembly of the ubiquinol-cytochrome c reductase complex (mitochondrial respiratory chain complex III or cytochrome b-c1 complex). Plays a role in the modulation of respiratory chain activities such as oxygen consumption and ATP production and via its modulation of the respiratory chain activity can regulate skeletal muscle differentiation and insulin secretion by pancreatic beta-cells. Involved in cytochrome b translation and/or stability. This is Ubiquinol-cytochrome c reductase complex assembly factor 2 (Uqcc2) from Mus musculus (Mouse).